Consider the following 2298-residue polypeptide: Protein Ycf2 (2298 aa).

1638-1645 serves as a coordination point for ATP; that stretch reads GSIGTGRS.

The protein belongs to the Ycf2 family.

It is found in the plastid. The protein resides in the chloroplast stroma. In terms of biological role, probable ATPase of unknown function. Its presence in a non-photosynthetic plant (Epifagus virginiana) and experiments in tobacco indicate that it has an essential function which is probably not related to photosynthesis. This is Protein Ycf2 from Gossypium barbadense (Sea Island cotton).